We begin with the raw amino-acid sequence, 143 residues long: Large ribosomal subunit protein uL11 (143 aa).

The protein belongs to the universal ribosomal protein uL11 family. Part of the ribosomal stalk of the 50S ribosomal subunit. Interacts with L10 and the large rRNA to form the base of the stalk. L10 forms an elongated spine to which L12 dimers bind in a sequential fashion forming a multimeric L10(L12)X complex. One or more lysine residues are methylated.

In terms of biological role, forms part of the ribosomal stalk which helps the ribosome interact with GTP-bound translation factors. This is Large ribosomal subunit protein uL11 from Rhizorhabdus wittichii (strain DSM 6014 / CCUG 31198 / JCM 15750 / NBRC 105917 / EY 4224 / RW1) (Sphingomonas wittichii).